The following is a 178-amino-acid chain: Large ribosomal subunit protein uL6 (178 aa).

The protein belongs to the universal ribosomal protein uL6 family. As to quaternary structure, part of the 50S ribosomal subunit.

In terms of biological role, this protein binds to the 23S rRNA, and is important in its secondary structure. It is located near the subunit interface in the base of the L7/L12 stalk, and near the tRNA binding site of the peptidyltransferase center. This chain is Large ribosomal subunit protein uL6, found in Buchnera aphidicola subsp. Schizaphis graminum (strain Sg).